We begin with the raw amino-acid sequence, 417 residues long: Gamma-glutamyl phosphate reductase (417 aa).

This sequence belongs to the gamma-glutamyl phosphate reductase family.

Its subcellular location is the cytoplasm. It catalyses the reaction L-glutamate 5-semialdehyde + phosphate + NADP(+) = L-glutamyl 5-phosphate + NADPH + H(+). Its pathway is amino-acid biosynthesis; L-proline biosynthesis; L-glutamate 5-semialdehyde from L-glutamate: step 2/2. Its function is as follows. Catalyzes the NADPH-dependent reduction of L-glutamate 5-phosphate into L-glutamate 5-semialdehyde and phosphate. The product spontaneously undergoes cyclization to form 1-pyrroline-5-carboxylate. This Escherichia coli O127:H6 (strain E2348/69 / EPEC) protein is Gamma-glutamyl phosphate reductase.